The chain runs to 831 residues: Translation initiation factor IF-2 (831 aa).

Residues 329-499 (TRAPVVTVMG…LLIAEMQDLK (171 aa)) form the tr-type G domain. The segment at 338–345 (GHVDHGKT) is G1. 338–345 (GHVDHGKT) contacts GTP. Residues 363-367 (GITQH) are G2. Positions 385–388 (DTPG) are G3. GTP contacts are provided by residues 385–389 (DTPGH) and 439–442 (NKID). The segment at 439–442 (NKID) is G4. The segment at 475–477 (SAL) is G5.

The protein belongs to the TRAFAC class translation factor GTPase superfamily. Classic translation factor GTPase family. IF-2 subfamily.

It is found in the cytoplasm. In terms of biological role, one of the essential components for the initiation of protein synthesis. Protects formylmethionyl-tRNA from spontaneous hydrolysis and promotes its binding to the 30S ribosomal subunits. Also involved in the hydrolysis of GTP during the formation of the 70S ribosomal complex. This chain is Translation initiation factor IF-2, found in Rickettsia rickettsii (strain Iowa).